Here is a 77-residue protein sequence, read N- to C-terminus: Acyl carrier protein (77 aa).

The Carrier domain occupies 2-77 (ADVLERVTKI…DAVTYIESHL (76 aa)). Ser-37 bears the O-(pantetheine 4'-phosphoryl)serine mark.

The protein belongs to the acyl carrier protein (ACP) family. 4'-phosphopantetheine is transferred from CoA to a specific serine of apo-ACP by AcpS. This modification is essential for activity because fatty acids are bound in thioester linkage to the sulfhydryl of the prosthetic group.

The protein resides in the cytoplasm. It participates in lipid metabolism; fatty acid biosynthesis. Carrier of the growing fatty acid chain in fatty acid biosynthesis. This is Acyl carrier protein from Bacillus mycoides (strain KBAB4) (Bacillus weihenstephanensis).